Here is a 424-residue protein sequence, read N- to C-terminus: D-inositol 3-phosphate glycosyltransferase (424 aa).

H21 lines the 1D-myo-inositol 3-phosphate pocket. Residues 27–28 (QP) and G35 each bind UDP-N-acetyl-alpha-D-glucosamine. 1D-myo-inositol 3-phosphate-binding positions include 32–37 (DAGGMN), K90, Y123, T147, and R167. UDP-N-acetyl-alpha-D-glucosamine contacts are provided by R241, K246, and Q299. Mg(2+) contacts are provided by F308, Q309, and A311. UDP-N-acetyl-alpha-D-glucosamine-binding residues include E321 and E329. T335 is a binding site for Mg(2+).

It belongs to the glycosyltransferase group 1 family. MshA subfamily. As to quaternary structure, homodimer.

It catalyses the reaction 1D-myo-inositol 3-phosphate + UDP-N-acetyl-alpha-D-glucosamine = 1D-myo-inositol 2-acetamido-2-deoxy-alpha-D-glucopyranoside 3-phosphate + UDP + H(+). In terms of biological role, catalyzes the transfer of a N-acetyl-glucosamine moiety to 1D-myo-inositol 3-phosphate to produce 1D-myo-inositol 2-acetamido-2-deoxy-glucopyranoside 3-phosphate in the mycothiol biosynthesis pathway. The chain is D-inositol 3-phosphate glycosyltransferase from Mycobacterium avium (strain 104).